Here is a 221-residue protein sequence, read N- to C-terminus: Octanoyltransferase (221 aa).

In terms of domain architecture, BPL/LPL catalytic spans 29 to 208 (DEIPDTCLLL…RLTEFLLPAR (180 aa)). Substrate-binding positions include 67–74 (RGGRITWH), 138–140 (AIG), and 151–153 (GFA). Cysteine 169 acts as the Acyl-thioester intermediate in catalysis.

Belongs to the LipB family.

It localises to the cytoplasm. The catalysed reaction is octanoyl-[ACP] + L-lysyl-[protein] = N(6)-octanoyl-L-lysyl-[protein] + holo-[ACP] + H(+). Its pathway is protein modification; protein lipoylation via endogenous pathway; protein N(6)-(lipoyl)lysine from octanoyl-[acyl-carrier-protein]: step 1/2. Functionally, catalyzes the transfer of endogenously produced octanoic acid from octanoyl-acyl-carrier-protein onto the lipoyl domains of lipoate-dependent enzymes. Lipoyl-ACP can also act as a substrate although octanoyl-ACP is likely to be the physiological substrate. The chain is Octanoyltransferase from Acidothermus cellulolyticus (strain ATCC 43068 / DSM 8971 / 11B).